A 155-amino-acid chain; its full sequence is Small ribosomal subunit protein uS7c (155 aa).

Belongs to the universal ribosomal protein uS7 family. As to quaternary structure, part of the 30S ribosomal subunit.

It localises to the plastid. It is found in the chloroplast. Its function is as follows. One of the primary rRNA binding proteins, it binds directly to 16S rRNA where it nucleates assembly of the head domain of the 30S subunit. This chain is Small ribosomal subunit protein uS7c (rps7), found in Chaetosphaeridium globosum (Charophycean green alga).